Here is a 335-residue protein sequence, read N- to C-terminus: NADH-quinone oxidoreductase subunit H (335 aa).

Helical transmembrane passes span 15–35 (VVKA…LSFV), 81–101 (MIFT…FSII), 114–134 (IGLL…LFAG), 154–174 (VSYE…VGSF), 187–207 (LWFI…GVAV), 238–258 (FFVG…TLFF), 270–290 (QVPF…FILL), and 307–327 (WKFC…IVLY).

Belongs to the complex I subunit 1 family. NDH-1 is composed of 13 different subunits. Subunits NuoA, H, J, K, L, M, N constitute the membrane sector of the complex.

The protein resides in the cell inner membrane. It carries out the reaction a quinone + NADH + 5 H(+)(in) = a quinol + NAD(+) + 4 H(+)(out). Functionally, NDH-1 shuttles electrons from NADH, via FMN and iron-sulfur (Fe-S) centers, to quinones in the respiratory chain. The immediate electron acceptor for the enzyme in this species is believed to be ubiquinone. Couples the redox reaction to proton translocation (for every two electrons transferred, four hydrogen ions are translocated across the cytoplasmic membrane), and thus conserves the redox energy in a proton gradient. This subunit may bind ubiquinone. This is NADH-quinone oxidoreductase subunit H from Pseudomonas putida (strain GB-1).